Reading from the N-terminus, the 182-residue chain is UPF0215 protein Pcal_0119 (182 aa).

This sequence belongs to the UPF0215 family.

The polypeptide is UPF0215 protein Pcal_0119 (Pyrobaculum calidifontis (strain DSM 21063 / JCM 11548 / VA1)).